The sequence spans 163 residues: uncharacterized protein (163 aa).

The stretch at 101 to 162 (LESMKVERKP…KMGERILERE (62 aa)) forms a coiled coil.

This is an uncharacterized protein from Aquifex aeolicus (strain VF5).